The primary structure comprises 202 residues: Small ribosomal subunit protein uS4c (202 aa).

One can recognise an S4 RNA-binding domain in the interval 90–153 (MRLDNIIFRL…KSETIISKNI (64 aa)).

Belongs to the universal ribosomal protein uS4 family. Part of the 30S ribosomal subunit. Contacts protein S5. The interaction surface between S4 and S5 is involved in control of translational fidelity.

The protein localises to the plastid. It localises to the chloroplast. Its function is as follows. One of the primary rRNA binding proteins, it binds directly to 16S rRNA where it nucleates assembly of the body of the 30S subunit. Functionally, with S5 and S12 plays an important role in translational accuracy. In Catharomnion ciliatum (Moss), this protein is Small ribosomal subunit protein uS4c (rps4).